A 311-amino-acid chain; its full sequence is tRNA dimethylallyltransferase 2 (311 aa).

Position 15-22 (15-22) interacts with ATP; that stretch reads GPTAVGKT. Substrate is bound at residue 17–22; sequence TAVGKT. Residues 40–43 are interaction with substrate tRNA; sequence DSMQ.

This sequence belongs to the IPP transferase family. As to quaternary structure, monomer. Mg(2+) is required as a cofactor.

The catalysed reaction is adenosine(37) in tRNA + dimethylallyl diphosphate = N(6)-dimethylallyladenosine(37) in tRNA + diphosphate. Catalyzes the transfer of a dimethylallyl group onto the adenine at position 37 in tRNAs that read codons beginning with uridine, leading to the formation of N6-(dimethylallyl)adenosine (i(6)A). The polypeptide is tRNA dimethylallyltransferase 2 (Syntrophus aciditrophicus (strain SB)).